Here is a 1118-residue protein sequence, read N- to C-terminus: Cytospin-A (1118 aa).

Disordered regions lie at residues 1-50, 75-175, 294-324, and 359-391; these read MKKA…AALS, KKSN…DNQI, SLSP…GSVE, and SSDD…NASE. Low complexity-rich tracts occupy residues 34–48, 80–90, and 99–113; these read APTG…AAAA, SSAAPSAPAPA, and KSST…RSTS. Positions 120–131 are enriched in basic and acidic residues; it reads SSTRERLRERTR. The span at 133 to 145 shows a compositional bias: polar residues; that stretch reads NQSKKLPSVSQGA. Residues 158–171 show a composition bias toward basic and acidic residues; that stretch reads TATEGDIRMSKSKS. Residues 168 to 281 adopt a coiled-coil conformation; the sequence is KSKSDNQISD…LNALGFSLEQ (114 aa). A compositionally biased stretch (polar residues) spans 294–304; it reads SLSPEITPGNQ. Low complexity predominate over residues 359 to 373; that stretch reads SSDDALDAPSSSESE. Phosphoserine is present on residues S385, S386, and S390. 2 coiled-coil regions span residues 395–450 and 488–808; these read ACLT…MESL and RYME…RGRV. Phosphoserine is present on residues S869, S882, and S888. Residues 916–999 form a disordered region; that stretch reads EHLLRTSSTS…STRSRIREER (84 aa). Basic and acidic residues predominate over residues 947–957; it reads RSSEEMKRDIS. Low complexity predominate over residues 972-992; it reads TTSPQLSLSSSPTASVTPSTR. Residues 1012 to 1117 form the Calponin-homology (CH) domain; it reads GSKRNALLKW…YVTAIYKYFE (106 aa).

Belongs to the cytospin-A family. As to quaternary structure, may interact with both microtubules and actin cytoskeleton.

The protein resides in the cytoplasm. It localises to the cytoskeleton. It is found in the spindle. Its subcellular location is the cell junction. The protein localises to the gap junction. Involved in cytokinesis and spindle organization. May play a role in actin cytoskeleton organization and microtubule stabilization and hence required for proper cell adhesion and migration. The polypeptide is Cytospin-A (Specc1l) (Rattus norvegicus (Rat)).